Consider the following 420-residue polypeptide: Putative competence-damage inducible protein (420 aa).

This sequence belongs to the CinA family.

The polypeptide is Putative competence-damage inducible protein (Lactiplantibacillus plantarum (strain ATCC BAA-793 / NCIMB 8826 / WCFS1) (Lactobacillus plantarum)).